The chain runs to 88 residues: Large ribosomal subunit protein eL20 (88 aa).

Belongs to the eukaryotic ribosomal protein eL20 family. As to quaternary structure, part of the 50S ribosomal subunit. Binds 23S rRNA.

The protein is Large ribosomal subunit protein eL20 of Aeropyrum pernix (strain ATCC 700893 / DSM 11879 / JCM 9820 / NBRC 100138 / K1).